The following is a 396-amino-acid chain: Acetyl-CoA acetyltransferase ERG10, cytosolic (396 aa).

The Acyl-thioester intermediate role is filled by C91. Y186 is a binding site for K(+). N227 and K230 together coordinate CoA. The K(+) site is built by A246, P247, and V347. Residues H351 and C381 each act as proton acceptor in the active site. N382 is a binding site for chloride.

It belongs to the thiolase-like superfamily. Thiolase family. In terms of assembly, homotetramer. The cofactor is K(+).

The protein localises to the cytoplasm. It is found in the cytosol. It carries out the reaction 2 acetyl-CoA = acetoacetyl-CoA + CoA. The protein operates within metabolic intermediate biosynthesis; (R)-mevalonate biosynthesis; (R)-mevalonate from acetyl-CoA: step 1/3. In terms of biological role, acetyl-CoA acetyltransferase; part of the first module of ergosterol biosynthesis pathway that includes the early steps of the pathway, conserved across all eukaryotes, and which results in the formation of mevalonate from acetyl-coenzyme A (acetyl-CoA). ERG10B catalyzes the formation of acetoacetyl-CoA from acetyl-CoA. The first module starts with the action of the cytosolic acetyl-CoA acetyltransferase ERG10B that catalyzes the formation of acetoacetyl-CoA. The hydroxymethylglutaryl-CoA synthases ERG13 then condenses acetyl-CoA with acetoacetyl-CoA to form HMG-CoA. The rate-limiting step of the early module is the reduction to mevalonate by the 3-hydroxy-3-methylglutaryl-coenzyme A (HMG-CoA) reductases HMG1. In Gibberella zeae (strain ATCC MYA-4620 / CBS 123657 / FGSC 9075 / NRRL 31084 / PH-1) (Wheat head blight fungus), this protein is Acetyl-CoA acetyltransferase ERG10, cytosolic.